The sequence spans 353 residues: 3-deoxy-D-manno-octulosonic acid transferase (353 aa).

Glu31 serves as the catalytic Proton acceptor. CMP contacts are provided by residues 211–212 (PR), 247–249 (FGI), and 273–276 (NLLE).

This sequence belongs to the glycosyltransferase group 1 family. Glycosyltransferase 30 subfamily. Can form homodimer, homotrimer and homotetramer.

The protein localises to the cell inner membrane. It carries out the reaction lipid IVA (E. coli) + CMP-3-deoxy-beta-D-manno-octulosonate = alpha-Kdo-(2-&gt;6)-lipid IVA (E. coli) + CMP + H(+). Its pathway is bacterial outer membrane biogenesis; LPS core biosynthesis. Functionally, involved in lipopolysaccharide (LPS) biosynthesis. Catalyzes the transfer of a single 3-deoxy-D-manno-octulosonate (Kdo) residue from CMP-Kdo to lipid IV(A), the tetraacyldisaccharide-1,4'-bisphosphate precursor of lipid A. Is strictly monofunctional, i.e. is capable of adding only a single Kdo residue to the acceptor lipid. The protein is 3-deoxy-D-manno-octulosonic acid transferase (kdtA) of Aquifex aeolicus (strain VF5).